Here is a 306-residue protein sequence, read N- to C-terminus: Glycine--tRNA ligase alpha subunit (306 aa).

It belongs to the class-II aminoacyl-tRNA synthetase family. In terms of assembly, tetramer of two alpha and two beta subunits.

Its subcellular location is the cytoplasm. It carries out the reaction tRNA(Gly) + glycine + ATP = glycyl-tRNA(Gly) + AMP + diphosphate. In Aliivibrio fischeri (strain ATCC 700601 / ES114) (Vibrio fischeri), this protein is Glycine--tRNA ligase alpha subunit.